We begin with the raw amino-acid sequence, 370 residues long: Phospho-2-dehydro-3-deoxyheptonate aldolase, tyrosine-inhibited (370 aa).

It belongs to the class-I DAHP synthase family.

The catalysed reaction is D-erythrose 4-phosphate + phosphoenolpyruvate + H2O = 7-phospho-2-dehydro-3-deoxy-D-arabino-heptonate + phosphate. It functions in the pathway metabolic intermediate biosynthesis; chorismate biosynthesis; chorismate from D-erythrose 4-phosphate and phosphoenolpyruvate: step 1/7. Its activity is regulated as follows. Inhibited by tyrosine. Stereospecific condensation of phosphoenolpyruvate (PEP) and D-erythrose-4-phosphate (E4P) giving rise to 3-deoxy-D-arabino-heptulosonate-7-phosphate (DAHP). This is Phospho-2-dehydro-3-deoxyheptonate aldolase, tyrosine-inhibited (ARO4) from Candida albicans (strain SC5314 / ATCC MYA-2876) (Yeast).